Here is a 299-residue protein sequence, read N- to C-terminus: MDLETRIKAYRFVAYSAVAFSVVAVISVCVTLPMVYNYVHHVKRTMHNEITFCKGSAKDIWNEVHALKSLPNSNRTARQAYNDAAVTGGGAQSGSCESCCLPGPPGPAGTPGKPGRPGKPGAPGLPGNPGRPPQQPCEPITPPPCKPCPQGPPGPPGPPGPPGDSGEPGSPGLPGQDAAPGEPGPKGPPGPPGAPGAPGTPGEPGVPAQSEPLIPGEPGPPGEAGPQGPPGSPGQPGADGSPGQPGPKGPNGPDGQPGADGNPGAPGPAGPPGSPGERGICPKYCAIDGGVFFEDGTRR.

The segment at 105 to 282 (PGPAGTPGKP…GSPGERGICP (178 aa)) is disordered. Pro residues predominate over residues 129–162 (PGRPPQQPCEPITPPPCKPCPQGPPGPPGPPGPP). The span at 164–181 (DSGEPGSPGLPGQDAAPG) shows a compositional bias: low complexity. Pro residues-rich tracts occupy residues 182 to 195 (EPGP…PGAP) and 215 to 233 (PGEP…PGSP). The triple-helical region stretch occupies residues 216–278 (GEPGPPGEAG…AGPPGSPGER (63 aa)). Positions 251 to 263 (NGPDGQPGADGNP) are enriched in low complexity. The segment covering 265-274 (APGPAGPPGS) has biased composition (pro residues).

Belongs to the cuticular collagen family. In terms of assembly, collagen polypeptide chains are complexed within the cuticle by disulfide bonds and other types of covalent cross-links.

Nematode cuticles are composed largely of collagen-like proteins. The cuticle functions both as an exoskeleton and as a barrier to protect the worm from its environment. The polypeptide is Cuticle collagen 34 (col-34) (Caenorhabditis elegans).